A 698-amino-acid chain; its full sequence is Serine/threonine-protein kinase Nek8 (698 aa).

A Protein kinase domain is found at 4 to 258 (YERIRVVGRG…LSHIMAQPLC (255 aa)). ATP is bound by residues 10 to 18 (VGRGAFGIV) and Lys33. The Proton acceptor role is filled by Asp128. Position 162 is a phosphothreonine; by autocatalysis (Thr162). Residues 281 to 307 (LTPGTPMAPGSTGSRATSARCRGVPRG) are disordered. 5 RCC1 repeats span residues 415-466 (RGII…ALSA), 467-518 (DGEL…ILTS), 520-571 (GRVL…TLLC), 585-636 (SGAC…AIGA), and 638-689 (GEVY…LAVR).

Belongs to the protein kinase superfamily. NEK Ser/Thr protein kinase family. NIMA subfamily. As to quaternary structure, interacts with PKD2; may regulate PKD2 targeting to the cilium. Interacts with ANKS6. Component of a complex containing at least ANKS6, INVS, NEK8 and NPHP3. ANKS6 may organize complex assembly by linking INVS and NPHP3 to NEK8 and INVS may target it to the proximal ciliary axoneme. Interacts with ANKS3. The cofactor is Mg(2+).

The protein localises to the cytoplasm. The protein resides in the cytoskeleton. It is found in the cell projection. It localises to the cilium. Its subcellular location is the cilium axoneme. The protein localises to the microtubule organizing center. The protein resides in the centrosome. It catalyses the reaction L-seryl-[protein] + ATP = O-phospho-L-seryl-[protein] + ADP + H(+). It carries out the reaction L-threonyl-[protein] + ATP = O-phospho-L-threonyl-[protein] + ADP + H(+). Its function is as follows. Required for renal tubular integrity. May regulate local cytoskeletal structure in kidney tubule epithelial cells. May regulate ciliary biogenesis through targeting of proteins to the cilia. Plays a role in organogenesis and is involved in the regulation of the Hippo signaling pathway. This Rattus norvegicus (Rat) protein is Serine/threonine-protein kinase Nek8 (Nek8).